The sequence spans 275 residues: Membrane protein insertase YidC 1 (275 aa).

The first 25 residues, 1 to 25 (MRKVLRVKKNIKIARIVPLVLLLVA), serve as a signal peptide directing secretion. Residue Cys26 is the site of N-palmitoyl cysteine attachment. Cys26 carries the S-diacylglycerol cysteine lipid modification. Helical transmembrane passes span 58 to 78 (SIGVGIILFTLTIRLMLMPLF), 129 to 149 (YASLLPLLIQMPVMIALFQAL), 171 to 191 (LYLLPVLAAVFTFLSTWLTNL), 198 to 216 (VMMTVMIYVMPLMIFFMGF), and 222 to 240 (VVLYWTVSNAFQVVQLLLL).

The protein belongs to the OXA1/ALB3/YidC family. Type 2 subfamily.

The protein localises to the cell membrane. In terms of biological role, required for the insertion and/or proper folding and/or complex formation of integral membrane proteins into the membrane. Involved in integration of membrane proteins that insert both dependently and independently of the Sec translocase complex, as well as at least some lipoproteins. This chain is Membrane protein insertase YidC 1, found in Streptococcus pyogenes serotype M6 (strain ATCC BAA-946 / MGAS10394).